Here is a 316-residue protein sequence, read N- to C-terminus: Coiled-coil domain-containing protein 130 homolog (316 aa).

Positions 182 to 203 (ANSRLRAEFRQQKKEINGQQEL) form a coiled coil. The tract at residues 287-316 (KLEETTSSATNEKPISLVGDYSSSDNDSNG) is disordered.

Belongs to the CWC16 family.

The sequence is that of Coiled-coil domain-containing protein 130 homolog from Drosophila melanogaster (Fruit fly).